Reading from the N-terminus, the 361-residue chain is Protein RecA (361 aa).

ATP is bound at residue glycine 77–threonine 84.

The protein belongs to the RecA family.

It is found in the cytoplasm. Functionally, can catalyze the hydrolysis of ATP in the presence of single-stranded DNA, the ATP-dependent uptake of single-stranded DNA by duplex DNA, and the ATP-dependent hybridization of homologous single-stranded DNAs. It interacts with LexA causing its activation and leading to its autocatalytic cleavage. The protein is Protein RecA of Rhizobium rhizogenes (strain K84 / ATCC BAA-868) (Agrobacterium radiobacter).